A 151-amino-acid polypeptide reads, in one-letter code: Gametocyte-specific factor 1-like (151 aa).

2 consecutive CHHC U11-48K-type zinc fingers follow at residues 6 to 33 (IEICPYNPHHRIPLSRFQYHLASCRKKN) and 40 to 67 (MASCKYNACHVVPIRKLAEHEATCVNRS). 8 residues coordinate Zn(2+): C9, H15, H25, C29, C43, H49, H59, and C63. The tract at residues 130 to 151 (QESRGGDQCPEDPQTRTRKANF) is disordered.

The protein belongs to the UPF0224 (FAM112) family.

The protein is Gametocyte-specific factor 1-like (Gtsf1l) of Mus musculus (Mouse).